A 189-amino-acid chain; its full sequence is Probable thymidylate kinase 1 (189 aa).

Residue 9–16 (GIDGSGKT) coordinates ATP.

Belongs to the thymidylate kinase family.

It catalyses the reaction dTMP + ATP = dTDP + ADP. This is Probable thymidylate kinase 1 (tmk1) from Saccharolobus solfataricus (strain ATCC 35092 / DSM 1617 / JCM 11322 / P2) (Sulfolobus solfataricus).